We begin with the raw amino-acid sequence, 522 residues long: GMP synthase [glutamine-hydrolyzing] (522 aa).

In terms of domain architecture, Glutamine amidotransferase type-1 spans 9–204 (KILILDFGAQ…VVDICGCQTL (196 aa)). Cys-86 acts as the Nucleophile in catalysis. Catalysis depends on residues His-178 and Glu-180. In terms of domain architecture, GMPS ATP-PPase spans 205–397 (WTAANIIEDQ…LGLPHAMVYR (193 aa)). An ATP-binding site is contributed by 232-238 (SGGVDSS).

Homodimer.

The catalysed reaction is XMP + L-glutamine + ATP + H2O = GMP + L-glutamate + AMP + diphosphate + 2 H(+). The protein operates within purine metabolism; GMP biosynthesis; GMP from XMP (L-Gln route): step 1/1. Functionally, catalyzes the synthesis of GMP from XMP. The protein is GMP synthase [glutamine-hydrolyzing] of Xylella fastidiosa (strain M12).